The following is a 411-amino-acid chain: Putative odorant receptor 59c (411 aa).

Over 1–46 the chain is Cytoplasmic; it reads MTKFFFKRLQTAPLDQEVSSLDASDYYYRIAFFLGWTPPKGALLRW. A helical transmembrane segment spans residues 47–67; it reads IYSLWTLTTMWLGIVYLPLGL. Residues 68–86 lie on the Extracellular side of the membrane; sequence SLTYVKHFDRFTPTEFLTS. A helical transmembrane segment spans residues 87–107; that stretch reads LQVDINCIGNVIKSCVTYSQM. At 108 to 139 the chain is on the cytoplasmic side; the sequence is WRFRRMNELISSLDKRCVTTTQRRIFHKMVAR. A helical membrane pass occupies residues 140-160; sequence VNLIVILFLSTYLGFCFLTLF. The Extracellular portion of the chain corresponds to 161-185; the sequence is TSVFAGKAPWQLYNPLVDWRKGHWQ. A helical membrane pass occupies residues 186–206; the sequence is LWIASILEYCVVSIGTMQELM. Residues 207–271 lie on the Cytoplasmic side of the membrane; sequence SDTYAIVFIS…QIIRPILSIT (65 aa). Residues 272–292 traverse the membrane as a helical segment; sequence IFAQFMLVGIDLGLAAISILF. Over 293 to 296 the chain is Extracellular; the sequence is FPNT. The helical transmembrane segment at 297-317 threads the bilayer; the sequence is IWTIMANVSFIVAICTESFPC. The Cytoplasmic segment spans residues 318–369; sequence CMLCEHLIEDSVHVSNALFHSNWITADRSYKSAVLYFLHRAQQPIQFTAGSI. Residues 370 to 390 form a helical membrane-spanning segment; it reads FPISVQSNIAVAKFAFTIITI. At 391-411 the chain is on the extracellular side; the sequence is VNQMNLGEKFFSDRSNGDINP.

This sequence belongs to the insect chemoreceptor superfamily. Heteromeric odorant receptor channel (TC 1.A.69) family. Or2a subfamily. As to quaternary structure, interacts with Orco. Complexes exist early in the endomembrane system in olfactory sensory neurons (OSNs), coupling these complexes to the conserved ciliary trafficking pathway. As to expression, expressed in olfactory sensory neurons in the maxillary palp.

Its subcellular location is the cell membrane. In terms of biological role, odorant receptor which mediates acceptance or avoidance behavior, depending on its substrates. The odorant receptor repertoire encodes a large collection of odor stimuli that vary widely in identity, intensity, and duration. May form a complex with Orco to form odorant-sensing units, providing sensitive and prolonged odorant signaling and calcium permeability. This chain is Putative odorant receptor 59c (Or59c), found in Drosophila melanogaster (Fruit fly).